We begin with the raw amino-acid sequence, 248 residues long: tRNA uridine(34) hydroxylase (248 aa).

The 95-residue stretch at 127–221 (RGRPLVLLDT…YFEEVGGEGY (95 aa)) folds into the Rhodanese domain. Cysteine 181 (cysteine persulfide intermediate) is an active-site residue.

It belongs to the TrhO family.

It catalyses the reaction uridine(34) in tRNA + AH2 + O2 = 5-hydroxyuridine(34) in tRNA + A + H2O. Its function is as follows. Catalyzes oxygen-dependent 5-hydroxyuridine (ho5U) modification at position 34 in tRNAs. The protein is tRNA uridine(34) hydroxylase of Xanthomonas axonopodis pv. citri (strain 306).